Reading from the N-terminus, the 645-residue chain is Zinc finger protein 64 (645 aa).

3 consecutive C2H2-type zinc fingers follow at residues 175 to 197 (HKCEVCGKCFSRKDKLKTHMRCH), 203 to 225 (YKCKTCDYAAADSSSLNKHLRIH), and 231 to 253 (FKCQICPYASRNSSQLTVHLRSH). Residue Glu286 forms a Glycyl lysine isopeptide (Lys-Gly) (interchain with G-Cter in SUMO2) linkage. Residues 299-324 (FNCCYPGCHFKTVHGMKDLDRHLRIH) form a C2H2-type 4; atypical zinc finger. 9 C2H2-type zinc fingers span residues 330–352 (HKCEFCDKCFSRKDNLTMHMRCH), 358–380 (HKCHLCDYAAVDSSSLKKHLRIH), 386–408 (YKCQLCPYASRNSSQLTVHLRSH), 414–436 (FQCWLCSAKFKISSDLKRHMIVH), 442–465 (FKCEFCDVRCTMKANLKSHIRIKH), 467–489 (FKCLHCAFQGRDRADLLEHSRLH), 495–517 (EKCPECSYSCSSAAALRVHSRVH), 523–546 (FKCDFCSFDTKRPSSLAKHVDKVH), and 580–602 (FRCETCGASFVRDDSLRCHKKQH). Asn397 is covalently cross-linked (Glycyl lysine isopeptide (Lys-Gly) (interchain with G-Cter in SUMO2)). Basic and acidic residues-rich tracts occupy residues 543–554 (DKVHRDEAKTEN) and 600–610 (KQHSDQSENKN). 2 disordered regions span residues 543 to 567 (DKVHRDEAKTENRAPLGKEGLREGS) and 600 to 645 (KQHS…SQDL). At Val545 the chain carries Phosphoserine. Residues 622–631 (ASGQLSTLVS) are compositionally biased toward polar residues.

This sequence belongs to the krueppel C2H2-type zinc-finger protein family. As to quaternary structure, interacts with ZNF70; this interaction promote the transactivation of the HES1 gene. Interacts with NOTCH1.

It localises to the nucleus. In terms of biological role, may be involved in the regulation of mesenchymal cell differentiation through transactivation of NOTCH1 target genes. This chain is Zinc finger protein 64, found in Homo sapiens (Human).